The sequence spans 803 residues: Sensor histidine kinase CheAY (803 aa).

His-47 carries the post-translational modification Phosphohistidine. Disordered regions lie at residues Leu-134–Asp-185 and Glu-209–Ala-255. Composition is skewed to basic and acidic residues over residues Ser-136–Ala-166, Glu-209–Gln-226, and Glu-233–Lys-254. The Histidine kinase domain occupies Arg-270–Leu-517. His-273 carries the phosphohistidine; by autocatalysis modification. Residues Ile-519–Ser-653 form the CheW-like domain. The Response regulatory domain occupies Ile-678–Ile-796. At Asp-729 the chain carries 4-aspartylphosphate.

In terms of processing, autophosphorylated.

The catalysed reaction is ATP + protein L-histidine = ADP + protein N-phospho-L-histidine.. In terms of biological role, member of the two-component regulatory system CheAY/CheY that regulates chemotaxis and colonization of the gastric mucosa. Functions as a sensor protein kinase which is autophosphorylated at a histidine residue and transfers its phosphate group to the conserved aspartic acid residue in the regulatory domain of CheY. In turn, phosphorylated CheY (CheY-P) interacts with the flagellar motor protein FliM to cause clockwise flagellar rotation and bacterial reversals, as opposed to straight swimming when CheY is not phosphorylated. The polypeptide is Sensor histidine kinase CheAY (cheAY) (Helicobacter pylori (strain ATCC 700392 / 26695) (Campylobacter pylori)).